A 429-amino-acid chain; its full sequence is MANVVVVGTQWGDEGKGKIVDWLSERADIIVRYQGGHNAGHTLVVNGVNYKLSLLPSGLVRGKLSIIGNGVVVDPHHFVVELKKLRDQGVKIVPEILRIAENAPLILSLHRDLDAIRESGFSGLKIGTTKRGIGPAYEDKVGRRAIRVMDLAEANTLMAKIKRLLRHHNALRRGMGVAEIDSQALYDELMQVADEILPFMDCTWRLLDESYRMGKHVLFEGAQGALLDNDFGTYPYVTSSNTVAGQACTGSGMGPGAIHYVLGIAKAYTTRVGEGPFPTEQINDIGEFLGIRGHEFGVVTGRKRRCGWFDAVLVRQMVTICGVQGIALTKLDVLDGLDEIKVCVGYELDGKRIDYLPSSMGAQSRVKPIYETLEGWKQATAHALKWEDLPVQAIKYIRYIEELIGTQVALLSTSPEREDTILITDPFAN.

GTP-binding positions include 12-18 and 40-42; these read GDEGKGK and GHT. Catalysis depends on Asp13, which acts as the Proton acceptor. Residues Asp13 and Gly40 each coordinate Mg(2+). IMP contacts are provided by residues 13–16, 38–41, Thr129, Arg143, Gln223, Thr238, and Arg302; these read DEGK and NAGH. His41 acts as the Proton donor in catalysis. Position 298–304 (298–304) interacts with substrate; that stretch reads VVTGRKR. Residues Arg304, 330–332, and 412–414 each bind GTP; these read KLD and STS.

The protein belongs to the adenylosuccinate synthetase family. Homodimer. The cofactor is Mg(2+).

The protein localises to the cytoplasm. The catalysed reaction is IMP + L-aspartate + GTP = N(6)-(1,2-dicarboxyethyl)-AMP + GDP + phosphate + 2 H(+). The protein operates within purine metabolism; AMP biosynthesis via de novo pathway; AMP from IMP: step 1/2. In terms of biological role, plays an important role in the de novo pathway of purine nucleotide biosynthesis. Catalyzes the first committed step in the biosynthesis of AMP from IMP. This chain is Adenylosuccinate synthetase, found in Bartonella henselae (strain ATCC 49882 / DSM 28221 / CCUG 30454 / Houston 1) (Rochalimaea henselae).